Here is a 275-residue protein sequence, read N- to C-terminus: Dermonecrotic toxin SpeSicTox-betaIIA3i (275 aa).

The active site involves histidine 5. Mg(2+) is bound by residues glutamate 25 and aspartate 27. The Nucleophile role is filled by histidine 41. 2 disulfides stabilise this stretch: cysteine 45–cysteine 51 and cysteine 47–cysteine 190. A Mg(2+)-binding site is contributed by aspartate 85.

It belongs to the arthropod phospholipase D family. Class II subfamily. Requires Mg(2+) as cofactor. In terms of tissue distribution, expressed by the venom gland.

It is found in the secreted. It carries out the reaction an N-(acyl)-sphingosylphosphocholine = an N-(acyl)-sphingosyl-1,3-cyclic phosphate + choline. It catalyses the reaction an N-(acyl)-sphingosylphosphoethanolamine = an N-(acyl)-sphingosyl-1,3-cyclic phosphate + ethanolamine. The catalysed reaction is a 1-acyl-sn-glycero-3-phosphocholine = a 1-acyl-sn-glycero-2,3-cyclic phosphate + choline. The enzyme catalyses a 1-acyl-sn-glycero-3-phosphoethanolamine = a 1-acyl-sn-glycero-2,3-cyclic phosphate + ethanolamine. Dermonecrotic toxins cleave the phosphodiester linkage between the phosphate and headgroup of certain phospholipids (sphingolipid and lysolipid substrates), forming an alcohol (often choline) and a cyclic phosphate. This toxin acts on sphingomyelin (SM). It may also act on ceramide phosphoethanolamine (CPE), lysophosphatidylcholine (LPC) and lysophosphatidylethanolamine (LPE), but not on lysophosphatidylserine (LPS), and lysophosphatidylglycerol (LPG). It acts by transphosphatidylation, releasing exclusively cyclic phosphate products as second products. Induces dermonecrosis, hemolysis, increased vascular permeability, edema, inflammatory response, and platelet aggregation. The sequence is that of Dermonecrotic toxin SpeSicTox-betaIIA3i from Sicarius peruensis (Six-eyed sand spider).